The following is a 420-amino-acid chain: Histidine--tRNA ligase (420 aa).

Belongs to the class-II aminoacyl-tRNA synthetase family. In terms of assembly, homodimer.

Its subcellular location is the cytoplasm. The catalysed reaction is tRNA(His) + L-histidine + ATP = L-histidyl-tRNA(His) + AMP + diphosphate + H(+). This is Histidine--tRNA ligase from Nitrosomonas europaea (strain ATCC 19718 / CIP 103999 / KCTC 2705 / NBRC 14298).